We begin with the raw amino-acid sequence, 221 residues long: Vesicle transport v-SNARE 13 (221 aa).

The Cytoplasmic segment spans residues 1–198; it reads MSQGFERYER…MTRRMNRNKW (198 aa). Residues 32-93 adopt a coiled-coil conformation; the sequence is EQKKQNLSEI…FKTEVKRITS (62 aa). Residues 199–219 traverse the membrane as a helical; Anchor for type IV membrane protein segment; the sequence is TIGAIITVLVLAIIFILYFKL. The Vesicular portion of the chain corresponds to 220–221; it reads TR.

It belongs to the VTI1 family. In terms of assembly, forms SNARE complexes with t-SNAREs. In terms of tissue distribution, expressed at low levels in roots, stems, flowers and leaves.

It localises to the vacuole membrane. The protein localises to the prevacuolar compartment membrane. It is found in the endosome membrane. The protein resides in the early endosome membrane. In terms of biological role, may function as a v-SNARE responsible for targeting vesicles involved in the secretory pathway. Involved in actin-dependent endosomal trafficking pathways associated with the vacuole within root hairs and root tip epidermal cells. Essential for cell wall organization and polarized root hair growth. Also required for the localization of SYP41 to the trans-Golgi network in root hair cells. The polypeptide is Vesicle transport v-SNARE 13 (Arabidopsis thaliana (Mouse-ear cress)).